The sequence spans 430 residues: Phosphomethylpyrimidine synthase 2 (430 aa).

Substrate contacts are provided by residues N66, M95, Y124, H164, 186–188 (SRG), 227–230 (DGFR), and E266. A Zn(2+)-binding site is contributed by H270. Y293 is a substrate binding site. Position 334 (H334) interacts with Zn(2+). 3 residues coordinate [4Fe-4S] cluster: C411, C414, and C418.

It belongs to the ThiC family. Homodimer. It depends on [4Fe-4S] cluster as a cofactor.

The enzyme catalyses 5-amino-1-(5-phospho-beta-D-ribosyl)imidazole + S-adenosyl-L-methionine = 4-amino-2-methyl-5-(phosphooxymethyl)pyrimidine + CO + 5'-deoxyadenosine + formate + L-methionine + 3 H(+). It participates in cofactor biosynthesis; thiamine diphosphate biosynthesis. In terms of biological role, catalyzes the synthesis of the hydroxymethylpyrimidine phosphate (HMP-P) moiety of thiamine from aminoimidazole ribotide (AIR) in a radical S-adenosyl-L-methionine (SAM)-dependent reaction. The protein is Phosphomethylpyrimidine synthase 2 of Syntrophotalea carbinolica (strain DSM 2380 / NBRC 103641 / GraBd1) (Pelobacter carbinolicus).